The following is a 273-amino-acid chain: 4-hydroxy-tetrahydrodipicolinate reductase (273 aa).

NAD(+) is bound by residues 12-17 and glutamate 38; that span reads GAGGRM. An NADP(+)-binding site is contributed by arginine 39. NAD(+) is bound by residues 102–104 and 126–129; these read GTT and AANF. Histidine 159 functions as the Proton donor/acceptor in the catalytic mechanism. A (S)-2,3,4,5-tetrahydrodipicolinate-binding site is contributed by histidine 160. Lysine 163 serves as the catalytic Proton donor. (S)-2,3,4,5-tetrahydrodipicolinate is bound at residue 169–170; the sequence is GT.

It belongs to the DapB family. As to quaternary structure, homotetramer.

The protein resides in the cytoplasm. It carries out the reaction (S)-2,3,4,5-tetrahydrodipicolinate + NAD(+) + H2O = (2S,4S)-4-hydroxy-2,3,4,5-tetrahydrodipicolinate + NADH + H(+). It catalyses the reaction (S)-2,3,4,5-tetrahydrodipicolinate + NADP(+) + H2O = (2S,4S)-4-hydroxy-2,3,4,5-tetrahydrodipicolinate + NADPH + H(+). The protein operates within amino-acid biosynthesis; L-lysine biosynthesis via DAP pathway; (S)-tetrahydrodipicolinate from L-aspartate: step 4/4. Functionally, catalyzes the conversion of 4-hydroxy-tetrahydrodipicolinate (HTPA) to tetrahydrodipicolinate. This chain is 4-hydroxy-tetrahydrodipicolinate reductase, found in Salmonella arizonae (strain ATCC BAA-731 / CDC346-86 / RSK2980).